Consider the following 46-residue polypeptide: Endochitinase 1A (46 aa).

Belongs to the glycosyl hydrolase 19 family. Chitinase class I subfamily.

It catalyses the reaction Random endo-hydrolysis of N-acetyl-beta-D-glucosaminide (1-&gt;4)-beta-linkages in chitin and chitodextrins.. Defense against chitin-containing fungal and bacterial pathogens. The polypeptide is Endochitinase 1A (Arachis hypogaea (Peanut)).